A 766-amino-acid polypeptide reads, in one-letter code: Serine/threonine-protein kinase tousled-like 1 (766 aa).

Residue Met-1 is modified to N-acetylmethionine. A compositionally biased stretch (polar residues) spans Met-1–Leu-19. Residues Met-1–Gly-197 are disordered. The segment covering Ser-20–Ser-33 has biased composition (low complexity). The residue at position 38 (Thr-38) is a Phosphothreonine. Residues Arg-43–Glu-64 are compositionally biased toward basic and acidic residues. Ser-54, Ser-77, and Ser-80 each carry phosphoserine. The span at Thr-68–Ala-85 shows a compositional bias: low complexity. A compositionally biased stretch (polar residues) spans Ala-87–Ser-103. Residues Ser-105–Arg-121 show a composition bias toward basic and acidic residues. A phosphoserine mark is found at Ser-134, Ser-159, Ser-174, and Ser-176. Low complexity predominate over residues Ser-170–Thr-192. Residues Gln-230–Lys-281 are a coiled coil. The segment at Leu-346–Val-383 is disordered. Positions Thr-353–Glu-365 are enriched in polar residues. Residues His-397–Gln-445 are a coiled coil. One can recognise a Protein kinase domain in the interval Tyr-456–Leu-734. Residues Leu-462–Val-470 and Lys-485 contribute to the ATP site. Asp-586 acts as the Proton acceptor in catalysis. Ser-743 carries the post-translational modification Phosphoserine.

The protein belongs to the protein kinase superfamily. Ser/Thr protein kinase family. Heterodimer with TLK2. Mg(2+) is required as a cofactor. In terms of tissue distribution, widely expressed. Present in fetal placenta, liver, kidney and pancreas but not heart or skeletal muscle. Also found in adult cell lines. Isoform 3 is ubiquitously expressed in all tissues examined.

Its subcellular location is the nucleus. The catalysed reaction is L-seryl-[protein] + ATP = O-phospho-L-seryl-[protein] + ADP + H(+). The enzyme catalyses L-threonyl-[protein] + ATP = O-phospho-L-threonyl-[protein] + ADP + H(+). With respect to regulation, cell-cycle regulated, maximal activity in S-phase. Inactivated by phosphorylation at Ser-743, potentially by CHEK1. Functionally, rapidly and transiently inhibited by phosphorylation following the generation of DNA double-stranded breaks during S-phase. This is cell cycle checkpoint and ATM-pathway dependent and appears to regulate processes involved in chromatin assembly. Isoform 3 phosphorylates and enhances the stability of the t-SNARE SNAP23, augmenting its assembly with syntaxin. Isoform 3 protects the cells from the ionizing radiation by facilitating the repair of DSBs. In vitro, phosphorylates histone H3 at 'Ser-10'. This chain is Serine/threonine-protein kinase tousled-like 1 (TLK1), found in Homo sapiens (Human).